A 308-amino-acid polypeptide reads, in one-letter code: Palmitoyltransferase ZDHHC7 (308 aa).

The Cytoplasmic portion of the chain corresponds to 1 to 50; the sequence is MQPSGHRLRDIEHHPLLTDNDNYDSASSSSSETDMADRVWFIRDGCGMVC. A helical membrane pass occupies residues 51–71; that stretch reads AVMTWLLVVYADFVVTFVMLL. Residues 72 to 75 are Lumenal-facing; it reads PSKD. The chain crosses the membrane as a helical span at residues 76–96; the sequence is FWYSVVNGVLFNCLAVLALSS. Over 97-173 the chain is Cytoplasmic; sequence HLRTMLTDPG…NNCVGEKNQR (77 aa). Residues 130-180 form the DHHC domain; the sequence is YKCPKCCCIKPERAHHCSICKRCIRKMDHHCPWVNNCVGEKNQRFFVLFTM. Cysteine 160 serves as the catalytic S-palmitoyl cysteine intermediate. The helical transmembrane segment at 174–194 threads the bilayer; that stretch reads FFVLFTMYIALSSVHALILCG. Topologically, residues 195–217 are lumenal; the sequence is LQFISCVRGQWTECSDFSPPITV. The helical transmembrane segment at 218 to 238 threads the bilayer; it reads ILLVFLCLEGLLFFTFTAVMF. Topologically, residues 239–308 are cytoplasmic; the sequence is GTQIHSICND…TRKGGPEFSV (70 aa).

This sequence belongs to the DHHC palmitoyltransferase family. In terms of assembly, homooligomers. Heterooligomers with ZDHHC3. Post-translationally, autopalmitoylated. Ubiquitously expressed, with highest levels in liver, kidney and brain. Expressed in all brain regions.

It is found in the golgi apparatus membrane. It catalyses the reaction L-cysteinyl-[protein] + hexadecanoyl-CoA = S-hexadecanoyl-L-cysteinyl-[protein] + CoA. The enzyme catalyses L-cysteinyl-[protein] + tetradecanoyl-CoA = S-tetradecanoyl-L-cysteinyl-[protein] + CoA. It carries out the reaction L-cysteinyl-[protein] + octadecanoyl-CoA = S-octadecanoyl-L-cysteinyl-[protein] + CoA. Its function is as follows. Golgi-localized palmitoyltransferase that catalyzes the addition of palmitate onto various protein substrates and therefore functions in several unrelated biological processes. Has no stringent fatty acid selectivity and in addition to palmitate can also transfer onto target proteins myristate from tetradecanoyl-CoA and stearate from octadecanoyl-CoA. Palmitoylates sex steroid hormone receptors, including ESR1, PGR and AR, thereby regulating their targeting to the plasma membrane and their function in rapid intracellular signaling upon binding of sex hormones. Palmitoylates GNAQ, a heterotrimeric G protein, regulating its dynamic localization at the plasma membrane and is thereby involved in GNAQ-dependent G protein-coupled receptor signaling pathways. Also functions in ligand-induced cell death by regulating the FAS signaling pathway through the palmitoylation and stabilization of the receptor at the plasma membrane. In epithelial cells, palmitoylates SCRIB and regulates its localization to the plasma membrane, regulating indirectly cell polarity and differentiation. Also palmitoylates JAM3 and promotes its expression at tight junctions and regulates its function in cell migration. Palmitoylates the glucose transporter GLUT4/SLC2A4 and controls the insulin-dependent translocation of GLUT4 to the plasma membrane. In brain, could also palmitoylate SNAP25 and DLG4/PSD95. Could also palmitoylate DNAJC5 and regulate its localization to the Golgi membrane. Could also palmitoylate NCDN. May play a role in follicle stimulation hormone (FSH) activation of testicular Sertoli cells. Activates pyroptosis by catalyzing palmitoylation of gasdermin-D (GSDMD). In Mus musculus (Mouse), this protein is Palmitoyltransferase ZDHHC7.